Here is a 727-residue protein sequence, read N- to C-terminus: Prolyl endopeptidase-like (727 aa).

Active-site charge relay system residues include serine 559, aspartate 645, and histidine 690.

The protein belongs to the peptidase S9A family. Homodimer. Interacts with the AP-1 complex.

It is found in the cytoplasm. The protein localises to the cytosol. The protein resides in the golgi apparatus. Its subcellular location is the trans-Golgi network. It localises to the cytoskeleton. It is found in the nucleus. Its function is as follows. Serine peptidase whose precise substrate specificity remains unclear. Does not cleave peptides after a arginine or lysine residue. Regulates trans-Golgi network morphology and sorting by regulating the membrane binding of the AP-1 complex. May play a role in the regulation of synaptic vesicle exocytosis. The chain is Prolyl endopeptidase-like (PREPL) from Pongo abelii (Sumatran orangutan).